A 319-amino-acid chain; its full sequence is tRNA U34 carboxymethyltransferase (319 aa).

Carboxy-S-adenosyl-L-methionine-binding positions include Lys88, Trp102, Lys107, Gly126, 176–177, Met192, Tyr196, and Arg311; that span reads LE.

It belongs to the class I-like SAM-binding methyltransferase superfamily. CmoB family. In terms of assembly, homotetramer.

The catalysed reaction is carboxy-S-adenosyl-L-methionine + 5-hydroxyuridine(34) in tRNA = 5-carboxymethoxyuridine(34) in tRNA + S-adenosyl-L-homocysteine + H(+). Its function is as follows. Catalyzes carboxymethyl transfer from carboxy-S-adenosyl-L-methionine (Cx-SAM) to 5-hydroxyuridine (ho5U) to form 5-carboxymethoxyuridine (cmo5U) at position 34 in tRNAs. The protein is tRNA U34 carboxymethyltransferase of Azotobacter vinelandii (strain DJ / ATCC BAA-1303).